The sequence spans 1571 residues: Neurexin-3 (1571 aa).

The N-terminal stretch at 1-27 (MSFTLHSVFFTLKVSIFLGSLVGLCLG) is a signal peptide. Residues 28-202 (LEFMGLPNQW…SVQLEAEGPC (175 aa)) form the Laminin G-like 1 domain. The Extracellular segment spans residues 28–1496 (LEFMGLPNQW…EVIRESSSTT (1469 aa)). 2 N-linked (GlcNAc...) asparagine glycosylation sites follow: N58 and N105. The EGF-like 1 domain occupies 198 to 235 (AEGPCGERPCENGGICFLLDGHPTCDCSTTGYGGTLCS). 3 disulfides stabilise this stretch: C202/C213, C207/C222, and C224/C234. 2 Laminin G-like domains span residues 258–440 (VATF…VFKC) and 447–639 (DPIN…KSSC). Ca(2+)-binding residues include D304, L321, and M374. 5 disulfides stabilise this stretch: C404–C440, C610–C639, C647–C658, C652–C667, and C669–C679. In terms of domain architecture, EGF-like 2 spans 643 to 680 (SAKQCDSYPCKNNAVCKDGWNRFICDCTGTGYWGRTCE). Laminin G-like domains are found at residues 685 to 857 (ILSY…IDYC) and 871 to 1046 (DPVT…ERGC). Residues D732 and L749 each coordinate Ca(2+). N-linked (GlcNAc...) asparagine glycosylation is present at N757. R807 provides a ligand contact to Ca(2+). Cystine bridges form between C1018-C1046, C1053-C1064, C1058-C1073, and C1075-C1085. Residues 1049-1086 (PSTTCQEDSCANQGVCMQQWEGFTCDCSMTSYSGNQCN) form the EGF-like 3 domain. The region spanning 1090-1290 (ATYIFGKSGG…NPNIKINGSV (201 aa)) is the Laminin G-like 6 domain. Positions 1142 and 1159 each coordinate Ca(2+). Residue N1189 is glycosylated (N-linked (GlcNAc...) asparagine). Ca(2+) is bound by residues I1241 and N1243. N-linked (GlcNAc...) asparagine glycosylation is found at N1287 and N1331. Positions 1324 to 1348 (ATTTTRKNRSTASIQPTSDDLVSSA) are disordered. Positions 1333-1348 (STASIQPTSDDLVSSA) are enriched in polar residues. A glycan (O-linked (Xyl...) (heparan sulfate) serine) is linked at S1347. Residues 1497–1517 (GMVVGIVAAAALCILILLYAM) form a helical membrane-spanning segment. Over 1518–1571 (YKYRNRDEGSYQVDETRNYISNSAQSNGTLMKEKQASSKSGHKKQKNKDKEYYV) the chain is Cytoplasmic. The segment at 1539-1571 (NSAQSNGTLMKEKQASSKSGHKKQKNKDKEYYV) is disordered.

This sequence belongs to the neurexin family. In terms of assembly, the laminin G-like domain 2 binds to NXPH1. Specific isoforms bind to alpha-dystroglycan. The cytoplasmic C-terminal region binds to CASK. Specific isoforms bind neuroligins NLGN1, NLGN2 and NLGN3. Interacts with CLSTN3. In terms of processing, O-glycosylated; contains heparan sulfate. Heparan sulfate attachment is required for synapse development by mediating interactions with neuroligins. Brain and arteries (at protein level).

Its subcellular location is the presynaptic cell membrane. In terms of biological role, neuronal cell surface protein that may be involved in cell recognition and cell adhesion. May mediate intracellular signaling. The sequence is that of Neurexin-3 (Nrxn3) from Mus musculus (Mouse).